Reading from the N-terminus, the 177-residue chain is Large ribosomal subunit protein uL6 (177 aa).

This sequence belongs to the universal ribosomal protein uL6 family. In terms of assembly, part of the 50S ribosomal subunit.

This protein binds to the 23S rRNA, and is important in its secondary structure. It is located near the subunit interface in the base of the L7/L12 stalk, and near the tRNA binding site of the peptidyltransferase center. This chain is Large ribosomal subunit protein uL6, found in Alkalilimnicola ehrlichii (strain ATCC BAA-1101 / DSM 17681 / MLHE-1).